The sequence spans 221 residues: Nuclear phosphoprotein UL3 homolog (221 aa).

It belongs to the alphaherpesvirinae HHV-1 UL3 family. In terms of processing, phosphorylated.

Its subcellular location is the host nucleus. In Varicella-zoster virus (strain Oka vaccine) (HHV-3), this protein is Nuclear phosphoprotein UL3 homolog.